The following is a 48-amino-acid chain: Small, acid-soluble spore protein P (48 aa).

A compositionally biased stretch (basic and acidic residues) spans 1 to 12 (MTNKNDGKDMRK). The segment at 1 to 48 (MTNKNDGKDMRKNAPKGAQPGQPEPLSGSKKVKNRNHTRQKHNSSHDM) is disordered. Basic residues predominate over residues 30 to 48 (KKVKNRNHTRQKHNSSHDM).

The protein belongs to the SspP family.

The protein localises to the spore core. This Bacillus licheniformis (strain ATCC 14580 / DSM 13 / JCM 2505 / CCUG 7422 / NBRC 12200 / NCIMB 9375 / NCTC 10341 / NRRL NRS-1264 / Gibson 46) protein is Small, acid-soluble spore protein P.